A 347-amino-acid polypeptide reads, in one-letter code: N6-Methyl-AMP deaminase-L (347 aa).

Positions 19 and 21 each coordinate Zn(2+). N(6)-methyl-AMP-binding positions include H21, N23, H69, S101–R104, D142, and G175. H202 is a binding site for Zn(2+). N(6)-methyl-AMP is bound by residues E205, D283, and D284. Catalysis depends on E205, which acts as the Proton donor. D283 lines the Zn(2+) pocket.

Belongs to the metallo-dependent hydrolases superfamily. Adenosine and AMP deaminases family. Monomer. Zn(2+) serves as cofactor.

The catalysed reaction is N(6)-methyl-AMP + H2O + H(+) = IMP + methylamine. In terms of biological role, catalyzes the hydrolysis of the free cytosolic methylated adenosine nucleotide N(6)-methyl-AMP (N6-mAMP) to produce inositol monophosphate (IMP) and methylamine. Is required for the catabolism of cytosolic N6-mAMP, which is derived from the degradation of mRNA containing N6-methylated adenine (m6A). The protein is N6-Methyl-AMP deaminase-L (mapda.L) of Xenopus laevis (African clawed frog).